The primary structure comprises 87 residues: U3-theraphotoxin-Hhn1d (87 aa).

Positions 1 to 24 (MVNMKASMFLTFAGLVLLFVVCYA) are cleaved as a signal peptide. The propeptide occupies 25-52 (SESEEKEFPKEMLSSIFAVDNDFKQEER). 3 disulfide bridges follow: Cys54–Cys67, Cys61–Cys72, and Cys66–Cys79.

It belongs to the neurotoxin 10 (Hwtx-1) family. 51 (Hntx-8) subfamily. Hntx-8 sub-subfamily. As to expression, expressed by the venom gland.

It is found in the secreted. In terms of biological role, ion channel inhibitor. The chain is U3-theraphotoxin-Hhn1d from Cyriopagopus hainanus (Chinese bird spider).